The following is a 200-amino-acid chain: Dephospho-CoA kinase (200 aa).

The DPCK domain occupies 4 to 200 (VIGLTGGIAS…AILKKWNIID (197 aa)). 12-17 (ASGKST) contacts ATP.

The protein belongs to the CoaE family.

It is found in the cytoplasm. It catalyses the reaction 3'-dephospho-CoA + ATP = ADP + CoA + H(+). The protein operates within cofactor biosynthesis; coenzyme A biosynthesis; CoA from (R)-pantothenate: step 5/5. In terms of biological role, catalyzes the phosphorylation of the 3'-hydroxyl group of dephosphocoenzyme A to form coenzyme A. This is Dephospho-CoA kinase from Bacillus thuringiensis subsp. konkukian (strain 97-27).